The sequence spans 914 residues: DNA mismatch repair protein MutS (914 aa).

Residues 28-74 (NTNSVKDSNLNDEELSKNAELRPRKRKKSVLLQNSVGEQTEDFSNDE) are disordered. 726–733 (GPNASGKS) is a binding site for ATP.

Belongs to the DNA mismatch repair MutS family.

This protein is involved in the repair of mismatches in DNA. It is possible that it carries out the mismatch recognition step. This protein has a weak ATPase activity. This chain is DNA mismatch repair protein MutS, found in Prochlorococcus marinus (strain SARG / CCMP1375 / SS120).